A 250-amino-acid polypeptide reads, in one-letter code: Probable transcriptional regulatory protein MAP_1030 (250 aa).

The protein belongs to the TACO1 family.

Its subcellular location is the cytoplasm. This Mycolicibacterium paratuberculosis (strain ATCC BAA-968 / K-10) (Mycobacterium paratuberculosis) protein is Probable transcriptional regulatory protein MAP_1030.